The chain runs to 324 residues: Delta-aminolevulinic acid dehydratase (324 aa).

Positions 118, 120, and 128 each coordinate Zn(2+). Catalysis depends on Lys-195, which acts as the Schiff-base intermediate with substrate. 5-aminolevulinate-binding residues include Arg-205 and Arg-217. Residue Glu-233 participates in Mg(2+) binding. Lys-248 acts as the Schiff-base intermediate with substrate in catalysis. 5-aminolevulinate-binding residues include Ser-274 and Tyr-313.

The protein belongs to the ALAD family. In terms of assembly, homooctamer. The cofactor is Zn(2+).

It catalyses the reaction 2 5-aminolevulinate = porphobilinogen + 2 H2O + H(+). It functions in the pathway porphyrin-containing compound metabolism; protoporphyrin-IX biosynthesis; coproporphyrinogen-III from 5-aminolevulinate: step 1/4. Its function is as follows. Catalyzes an early step in the biosynthesis of tetrapyrroles. Binds two molecules of 5-aminolevulinate per subunit, each at a distinct site, and catalyzes their condensation to form porphobilinogen. The protein is Delta-aminolevulinic acid dehydratase (hemB) of Staphylococcus aureus (strain NCTC 8325 / PS 47).